The sequence spans 512 residues: Bifunctional purine biosynthesis protein PurH (512 aa).

The region spanning 1-144 is the MGS-like domain; that stretch reads MKRALVSVSD…KNYHDVTIVV (144 aa).

The protein belongs to the PurH family.

It catalyses the reaction (6R)-10-formyltetrahydrofolate + 5-amino-1-(5-phospho-beta-D-ribosyl)imidazole-4-carboxamide = 5-formamido-1-(5-phospho-D-ribosyl)imidazole-4-carboxamide + (6S)-5,6,7,8-tetrahydrofolate. It carries out the reaction IMP + H2O = 5-formamido-1-(5-phospho-D-ribosyl)imidazole-4-carboxamide. The protein operates within purine metabolism; IMP biosynthesis via de novo pathway; 5-formamido-1-(5-phospho-D-ribosyl)imidazole-4-carboxamide from 5-amino-1-(5-phospho-D-ribosyl)imidazole-4-carboxamide (10-formyl THF route): step 1/1. It participates in purine metabolism; IMP biosynthesis via de novo pathway; IMP from 5-formamido-1-(5-phospho-D-ribosyl)imidazole-4-carboxamide: step 1/1. This Limosilactobacillus reuteri (strain DSM 20016) (Lactobacillus reuteri) protein is Bifunctional purine biosynthesis protein PurH.